A 732-amino-acid polypeptide reads, in one-letter code: MAP7 domain-containing protein 2 (732 aa).

M1 carries the post-translational modification N-acetylmethionine. Gly residues predominate over residues 1-10; that stretch reads MERGGGGSGT. Disordered regions lie at residues 1 to 64, 95 to 123, 157 to 186, 210 to 244, and 279 to 509; these read MERG…RREE, WRKL…LREE, PGGH…KRLS, GPLN…GKEA, and EFSG…KQKE. Residues 49–64 are compositionally biased toward basic and acidic residues; the sequence is LKSDERQRLAKERREE. Positions 51-146 form a coiled coil; sequence SDERQRLAKE…RTQQLELKKK (96 aa). A compositionally biased stretch (basic and acidic residues) spans 329–345; it reads MPKRKAEKEKSNKEREG. A compositionally biased stretch (low complexity) spans 347 to 357; sequence LAQQAAGPQGE. The span at 359-374 shows a compositional bias: basic and acidic residues; sequence ALEKHVVDKHASEKHA. The segment covering 375 to 386 has biased composition (low complexity); it reads AAAGGKAENSAA. The span at 404-509 shows a compositional bias: basic and acidic residues; that stretch reads LAEKRRQARL…EKAMIEKQKE (106 aa).

The protein belongs to the MAP7 family. As to quaternary structure, interacts (via N-terminus) with microtubules; facilitates microtubule stabilization. Interacts with kinesin-1 family members, KIF5A, KIF5B and KIF5C.

The protein resides in the cytoplasm. It is found in the cytoskeleton. The protein localises to the microtubule organizing center. Its subcellular location is the centrosome. It localises to the midbody. The protein resides in the cell projection. It is found in the neuron projection. The protein localises to the axon. Functionally, microtubule-stabilizing protein that plays a role in the control of cell motility and neurite outgrowth via direct binding to the microtubule. Acts as a critical cofactor for kinesin transport. In the proximal axon, regulates kinesin-1 family members, KIF5A, KIF5B and KIF5C recruitment to microtubules and contributes to kinesin-1-mediated transport in the axons. This Homo sapiens (Human) protein is MAP7 domain-containing protein 2 (MAP7D2).